The following is a 724-amino-acid chain: Ribosomal RNA large subunit methyltransferase K/L (724 aa).

Positions 42–153 (DAQRLVLWSR…KGRATLSVDL (112 aa)) constitute a THUMP domain.

It belongs to the methyltransferase superfamily. RlmKL family.

It is found in the cytoplasm. The catalysed reaction is guanosine(2445) in 23S rRNA + S-adenosyl-L-methionine = N(2)-methylguanosine(2445) in 23S rRNA + S-adenosyl-L-homocysteine + H(+). The enzyme catalyses guanosine(2069) in 23S rRNA + S-adenosyl-L-methionine = N(2)-methylguanosine(2069) in 23S rRNA + S-adenosyl-L-homocysteine + H(+). Specifically methylates the guanine in position 2445 (m2G2445) and the guanine in position 2069 (m7G2069) of 23S rRNA. This Xylella fastidiosa (strain M23) protein is Ribosomal RNA large subunit methyltransferase K/L.